The chain runs to 193 residues: Cysteine and glycine-rich protein 1 (193 aa).

An LIM zinc-binding 1 domain is found at 10 to 61 (CGVCQKTVYFAEEVQCEGNSFHKSCFLCMVCKKNLDSTTVAVHGEEIYCKSC). A Nuclear localization signal motif is present at residues 64–69 (KKYGPK). S81 is subject to Phosphoserine. The residue at position 84 (K84) is an N6-acetyllysine. K91 participates in a covalent cross-link: Glycyl lysine isopeptide (Lys-Gly) (interchain with G-Cter in SUMO2). An N6-acetyllysine mark is found at K112, K131, K137, and K161. The LIM zinc-binding 2 domain occupies 119–170 (CPRCSQAVYAAEKVIGAGKSWHKACFRCAKCGKGLESTTLADKDGEIYCKGC). Phosphoserine is present on S192.

Interacts with ASCC1; ASCC2 and TRIP4.

The protein localises to the nucleus. In terms of biological role, could play a role in neuronal development. This chain is Cysteine and glycine-rich protein 1 (CSRP1), found in Homo sapiens (Human).